We begin with the raw amino-acid sequence, 41 residues long: Large ribosomal subunit protein bL36 (41 aa).

This sequence belongs to the bacterial ribosomal protein bL36 family.

This chain is Large ribosomal subunit protein bL36, found in Methylobacterium nodulans (strain LMG 21967 / CNCM I-2342 / ORS 2060).